We begin with the raw amino-acid sequence, 143 residues long: Ribonuclease P protein component 2 (143 aa).

The protein belongs to the eukaryotic/archaeal RNase P protein component 2 family. Consists of a catalytic RNA component and at least 4-5 protein subunits.

Its subcellular location is the cytoplasm. The catalysed reaction is Endonucleolytic cleavage of RNA, removing 5'-extranucleotides from tRNA precursor.. Part of ribonuclease P, a protein complex that generates mature tRNA molecules by cleaving their 5'-ends. This is Ribonuclease P protein component 2 from Saccharolobus solfataricus (strain ATCC 35092 / DSM 1617 / JCM 11322 / P2) (Sulfolobus solfataricus).